Consider the following 295-residue polypeptide: Putative sugar uptake protein YxfA (295 aa).

A run of 10 helical transmembrane segments spans residues 4–26, 33–50, 54–72, 85–107, 117–135, 156–178, 188–206, 213–235, 241–263, and 270–291; these read VLLA…KFGG, LGMT…FLFR, LTWQ…WAIG, VSVA…GVFA, FILG…YFSA, ALTY…AVLW, IILP…MGRF, YVYQ…LMAA, AIAF…LFLG, and ELVY…LAIV.

This sequence belongs to the GRP transporter (TC 2.A.7.5) family.

It is found in the cell membrane. The chain is Putative sugar uptake protein YxfA (yxfA) from Lactococcus lactis subsp. lactis (strain IL1403) (Streptococcus lactis).